The chain runs to 42 residues: Large ribosomal subunit protein bL36 (42 aa).

It belongs to the bacterial ribosomal protein bL36 family.

This is Large ribosomal subunit protein bL36 from Wolbachia sp. subsp. Brugia malayi (strain TRS).